Here is a 62-residue protein sequence, read N- to C-terminus: Ribulose bisphosphate carboxylase/oxygenase activase, chloroplastic (62 aa).

The protein belongs to the RuBisCO activase family.

Its subcellular location is the plastid. The protein localises to the chloroplast stroma. In terms of biological role, activation of RuBisCO (ribulose-1,5-bisphosphate carboxylase/oxygenase; EC 4.1.1.39) involves the ATP-dependent carboxylation of the epsilon-amino group of lysine leading to a carbamate structure. This Vitis sp. (Grape) protein is Ribulose bisphosphate carboxylase/oxygenase activase, chloroplastic.